The primary structure comprises 278 residues: F-box only protein 17 (278 aa).

The region spanning 15–62 (SLALDALPPELLVQVLSHVPPRSLVTRCRPVCRAWRDIVDGPTVWLLQ) is the F-box domain. The 177-residue stretch at 99-275 (YCLRAPFGRN…VTHSSVRVRI (177 aa)) folds into the FBA domain.

Part of a SCF (SKP1-cullin-F-box) protein ligase complex. Interacts with SKP1 and CUL1. Expressed in heart, skeletal muscle, liver and kidney. Expressed at lower levels in spleen and brain.

Substrate-recognition component of the SCF (SKP1-CUL1-F-box protein)-type E3 ubiquitin ligase complex. Able to recognize and bind denatured glycoproteins, which are modified with complex-type oligosaccharides. Also recognizes sulfated glycans. Does not bind high-mannose glycoproteins. In Homo sapiens (Human), this protein is F-box only protein 17 (FBXO17).